The primary structure comprises 686 residues: MSKIRVYKLAKELGKSSKELVNILNDLGVEVSSHMSTVEDETAELVKGMLQEEDKPEEKISKKEPDKKDRKKTKGKKQMTRTATQKEGTEHGQKDTDRREMRVTVNPPLSVKELAEKADIPVNRIIKTLIGLGVMATVNHQIDEEIVKKLIDKMNLKIKISQGEDKEEKPDKVQTDIKDKPEDLELRPPIVTVMGHVDHGKTTLLDVIRETRVAESEAGGITQHIGAYQAVVQNKKITFIDTPGHEAFTAMRARGARLTDIAILVVAADDGVMPQTVEAINHAKAADIPIIVAINKVDKSNAQPDMVKQQLTEHGLVPEDWGGDTICVPISALKKKNIDELLEMVLLVAEMEELKANPDRPAEGVIVESQLDKGRGPVATVLVKNGTLKVGDPILAGYTHGKVRAMINDQGKRIKEALPSTPVEVLGFSDVPAAGDYVQVLEDEKEARAIAEERLQKKQERDLQHDGRISLDGLYQQIKEGGVKELNLIIKGDVHGSIEALRESLVKLSTDEVTVNIIHTGVGAINETDVNLASASNAIIIGFNVRPDSNARKLAEREKVEIKTYRVIYKIIEDLKDAMAGMLEPELKEEVTGRAEVRATFKVPNVGTVAGLYVKEGFINRNNKVRLLRDGVVVYEGDIASLKRFKNDVREVKEGYECGLGIEGYNDIKEGDQIETYTYREIKRTL.

The tract at residues 35-99 (MSTVEDETAE…EHGQKDTDRR (65 aa)) is disordered. Residues 50–68 (LQEEDKPEEKISKKEPDKK) are compositionally biased toward basic and acidic residues. The span at 69–79 (DRKKTKGKKQM) shows a compositional bias: basic residues. Residues 87–99 (EGTEHGQKDTDRR) are compositionally biased toward basic and acidic residues. The 170-residue stretch at 186–355 (LRPPIVTVMG…LLVAEMEELK (170 aa)) folds into the tr-type G domain. The tract at residues 195–202 (GHVDHGKT) is G1. A GTP-binding site is contributed by 195–202 (GHVDHGKT). The G2 stretch occupies residues 220 to 224 (GITQH). Residues 241–244 (DTPG) are G3. GTP is bound by residues 241 to 245 (DTPGH) and 295 to 298 (NKVD). Residues 295–298 (NKVD) are G4. The G5 stretch occupies residues 331 to 333 (SAL).

The protein belongs to the TRAFAC class translation factor GTPase superfamily. Classic translation factor GTPase family. IF-2 subfamily.

The protein localises to the cytoplasm. One of the essential components for the initiation of protein synthesis. Protects formylmethionyl-tRNA from spontaneous hydrolysis and promotes its binding to the 30S ribosomal subunits. Also involved in the hydrolysis of GTP during the formation of the 70S ribosomal complex. The chain is Translation initiation factor IF-2 from Halothermothrix orenii (strain H 168 / OCM 544 / DSM 9562).